We begin with the raw amino-acid sequence, 219 residues long: Ribose-5-phosphate isomerase A (219 aa).

Substrate-binding positions include 28–31 (TGST), 81–84 (DGAD), and 94–97 (KGGG). The Proton acceptor role is filled by glutamate 103. Lysine 121 provides a ligand contact to substrate.

Belongs to the ribose 5-phosphate isomerase family. In terms of assembly, homodimer.

The catalysed reaction is aldehydo-D-ribose 5-phosphate = D-ribulose 5-phosphate. It participates in carbohydrate degradation; pentose phosphate pathway; D-ribose 5-phosphate from D-ribulose 5-phosphate (non-oxidative stage): step 1/1. Its function is as follows. Catalyzes the reversible conversion of ribose-5-phosphate to ribulose 5-phosphate. This chain is Ribose-5-phosphate isomerase A, found in Pectobacterium atrosepticum (strain SCRI 1043 / ATCC BAA-672) (Erwinia carotovora subsp. atroseptica).